A 204-amino-acid polypeptide reads, in one-letter code: Guanylate kinase (204 aa).

A Guanylate kinase-like domain is found at 18 to 196 (PKLFTISAPA…SYEILKSIFI (179 aa)). Residue 25 to 32 (APAGAGKT) participates in ATP binding.

Belongs to the guanylate kinase family.

Its subcellular location is the cytoplasm. It carries out the reaction GMP + ATP = GDP + ADP. Essential for recycling GMP and indirectly, cGMP. The protein is Guanylate kinase of Chlamydia caviae (strain ATCC VR-813 / DSM 19441 / 03DC25 / GPIC) (Chlamydophila caviae).